The primary structure comprises 216 residues: Large ribosomal subunit protein uL3 (216 aa).

The segment at 119 to 143 is disordered; sequence GYQGNIHKDGQSRGPMAHGSRYHRR.

It belongs to the universal ribosomal protein uL3 family. As to quaternary structure, part of the 50S ribosomal subunit. Forms a cluster with proteins L14 and L19.

Functionally, one of the primary rRNA binding proteins, it binds directly near the 3'-end of the 23S rRNA, where it nucleates assembly of the 50S subunit. This is Large ribosomal subunit protein uL3 from Levilactobacillus brevis (strain ATCC 367 / BCRC 12310 / CIP 105137 / JCM 1170 / LMG 11437 / NCIMB 947 / NCTC 947) (Lactobacillus brevis).